The sequence spans 495 residues: MPWFKNLIKISKTITNQSSSYKSITPLASPLLAQFLQFTKQYSTNDHVVGLEATKSDQKPRIVVLGSGWAGCRLMKDIDTNIYDVVCVSPRNHMVFTPLLASTCVGTLEFRSVAEPIGRIQPAVSTQPASYFFLANCNAIDFDNHMIQCQTVTEGVETLEPWKFNVSYDKLVIASGAHALTFGIKGVNEHATFLREVHHAQEIRRKLLLNLMLSDVPGVSEEEKRRLLHCVVVGGGPTGVEFSGELSDFILKDVHQRYAHVKDYIHVTLIEANEILSSFDDRLRVYATNQLTKSGVRLVRGLVQHVQPDKIILSDGTNVPYGLLVWSTGVGPSPFVNSLDIPKAKGRIGIDEWLRVPSVQDVYSIGDCSGFLESTGRQVLPALAQVAERQGKYLASLLNKVGKEGGGHANCAQNINLGDPFVYKHLGSMATIGRYKALVDLRESKEAKGVSLAGFTSFFVWRSAYLTRVVSWRNKIYVLINWLTTLVFGRDISRI.

The transit peptide at 1-41 directs the protein to the mitochondrion; it reads MPWFKNLIKISKTITNQSSSYKSITPLASPLLAQFLQFTKQ. Residue 61 to 91 coordinates FAD; sequence RIVVLGSGWAGCRLMKDIDTNIYDVVCVSPR. 228–264 contributes to the NAD(+) binding site; the sequence is LHCVVVGGGPTGVEFSGELSDFILKDVHQRYAHVKDY. The Microbody targeting signal signature appears at 486–495; the sequence is LVFGRDISRI.

This sequence belongs to the NADH dehydrogenase family. FAD is required as a cofactor.

The protein localises to the mitochondrion inner membrane. The protein resides in the peroxisome. It carries out the reaction a quinone + NADH + H(+) = a quinol + NAD(+). The enzyme catalyses a ubiquinone + NADH + H(+) = a ubiquinol + NAD(+). Functionally, alternative NADH-ubiquinone oxidoreductase which catalyzes the oxidation of mitochondrial NADH does not translocate protons across the inner mitochondrial membrane. In Solanum tuberosum (Potato), this protein is Internal alternative NAD(P)H-ubiquinone oxidoreductase A1, mitochondrial (NDA1).